The sequence spans 294 residues: AKTDIPVNIYKPKNPYIGKCLSNEELVREGGTGTVRHLIFDISGGDLRYLEGQSIGIIPPGTDNNGKPHKLRLYSIASTRHGDHVDDKTVSLCVRQLEYKHPETGETVYGVCSTYLCNLEAGADVAITGPVGKEMLLPEDEDATIIMMATGTGIAPFRAFLWRIFKEQHEDYKFKGLAWLFFGIPYSPNILYQQELEELQEEFPENFRLTLAISREQQNPEGGKMYIQDRIKENADQLWELIQKPNTHTYICGLKGMEGGIDEGMSAAAGKFDVDWSDYQKELKKKHRWHVETY.

The region spanning 13-137 (KNPYIGKCLS…TGPVGKEMLL (125 aa)) is the FAD-binding FR-type domain. Residues 72 to 75 (RLYS), 93 to 95 (CVR), Y99, 111 to 113 (VCS), and T152 contribute to the FAD site. NADP(+)-binding residues include S75 and R95. NADP(+) is bound by residues T152, 184-185 (IP), 214-215 (SR), K224, 224-228 (KMYIQ), 253-254 (GL), and E292.

Belongs to the ferredoxin--NADP reductase type 1 family. FAD is required as a cofactor.

It is found in the cellular thylakoid membrane. It carries out the reaction 2 reduced [2Fe-2S]-[ferredoxin] + NADP(+) + H(+) = 2 oxidized [2Fe-2S]-[ferredoxin] + NADPH. The protein is Ferredoxin--NADP reductase (petH) of Spirulina sp.